The chain runs to 29 residues: Potassium channel toxin alpha-KTx 20.1 (29 aa).

Intrachain disulfides connect C2–C20, C7–C24, and C11–C26.

It belongs to the short scorpion toxin superfamily. Potassium channel inhibitor family. Alpha-KTx 20 subfamily. As to expression, expressed by the venom gland.

It is found in the secreted. Its function is as follows. Reduces potassium currents through Kv1.2/KCNA2 and Kv1.3/KCNA3 voltage-gated potassium channels. This is Potassium channel toxin alpha-KTx 20.1 from Tityus trivittatus (Argentinean scorpion).